Reading from the N-terminus, the 673-residue chain is DNA ligase (673 aa).

NAD(+)-binding positions include 34–38 (DAEYD), 83–84 (SL), and Glu-116. Lys-118 serves as the catalytic N6-AMP-lysine intermediate. Residues Arg-139, Glu-176, Lys-293, and Lys-317 each contribute to the NAD(+) site. The Zn(2+) site is built by Cys-411, Cys-414, Cys-429, and Cys-435. In terms of domain architecture, BRCT spans 595-673 (NQQNPFFGKT…EDEFLKWVNS (79 aa)).

This sequence belongs to the NAD-dependent DNA ligase family. LigA subfamily. It depends on Mg(2+) as a cofactor. Requires Mn(2+) as cofactor.

The catalysed reaction is NAD(+) + (deoxyribonucleotide)n-3'-hydroxyl + 5'-phospho-(deoxyribonucleotide)m = (deoxyribonucleotide)n+m + AMP + beta-nicotinamide D-nucleotide.. Its function is as follows. DNA ligase that catalyzes the formation of phosphodiester linkages between 5'-phosphoryl and 3'-hydroxyl groups in double-stranded DNA using NAD as a coenzyme and as the energy source for the reaction. It is essential for DNA replication and repair of damaged DNA. This is DNA ligase from Legionella pneumophila (strain Lens).